Reading from the N-terminus, the 671-residue chain is uncharacterized protein (671 aa).

The chain crosses the membrane as a helical span at residues 39–56 (ATVTVVILLLILLLGWGY).

The protein resides in the membrane. This is an uncharacterized protein from Treponema pallidum (strain Nichols).